The following is a 356-amino-acid chain: UDP-3-O-acylglucosamine N-acyltransferase (356 aa).

H251 functions as the Proton acceptor in the catalytic mechanism.

The protein belongs to the transferase hexapeptide repeat family. LpxD subfamily. In terms of assembly, homotrimer.

It catalyses the reaction a UDP-3-O-[(3R)-3-hydroxyacyl]-alpha-D-glucosamine + a (3R)-hydroxyacyl-[ACP] = a UDP-2-N,3-O-bis[(3R)-3-hydroxyacyl]-alpha-D-glucosamine + holo-[ACP] + H(+). Its pathway is bacterial outer membrane biogenesis; LPS lipid A biosynthesis. Functionally, catalyzes the N-acylation of UDP-3-O-acylglucosamine using 3-hydroxyacyl-ACP as the acyl donor. Is involved in the biosynthesis of lipid A, a phosphorylated glycolipid that anchors the lipopolysaccharide to the outer membrane of the cell. The sequence is that of UDP-3-O-acylglucosamine N-acyltransferase from Ralstonia nicotianae (strain ATCC BAA-1114 / GMI1000) (Ralstonia solanacearum).